The primary structure comprises 323 residues: MDKSNSSVVSEFVLLGLCSSQKLQLFYFCFFSVLYTVIVLGNLLIILTVTSDTSLHSPMYFLLGNLSFVDICQASFATPKMIADFLSAHETISFSGCIAQIFFIHLFTGGEMVLLVSMAYDRYVAICKPLYYVVIMSRRTCTVLVMISWAVSLVHTLSQLSFTVNLPFCGPNVVDSFFCDLPRVTKLACLDSYIIEILIVVNSGILSLSTFSLLVSSYIIILVTVWLKSSAAMAKAFSTLASHIAVVILFFGPCIFIYVWPFTISPLDKFLAIFYTVFTPVLNPIIYTLRNRDMKAAVRKIVNHYLRPRRISEMSLVVRTSFH.

The Extracellular portion of the chain corresponds to 1 to 25 (MDKSNSSVVSEFVLLGLCSSQKLQL). An N-linked (GlcNAc...) asparagine glycan is attached at Asn-5. Residues 26–49 (FYFCFFSVLYTVIVLGNLLIILTV) traverse the membrane as a helical segment. Residues 50-57 (TSDTSLHS) are Cytoplasmic-facing. The chain crosses the membrane as a helical span at residues 58–79 (PMYFLLGNLSFVDICQASFATP). The Extracellular segment spans residues 80–100 (KMIADFLSAHETISFSGCIAQ). Residues Cys-97 and Cys-189 are joined by a disulfide bond. A helical transmembrane segment spans residues 101–120 (IFFIHLFTGGEMVLLVSMAY). Residues 121–139 (DRYVAICKPLYYVVIMSRR) are Cytoplasmic-facing. A helical membrane pass occupies residues 140-158 (TCTVLVMISWAVSLVHTLS). At 159–195 (QLSFTVNLPFCGPNVVDSFFCDLPRVTKLACLDSYII) the chain is on the extracellular side. Residues 196–219 (EILIVVNSGILSLSTFSLLVSSYI) traverse the membrane as a helical segment. Residues 220–235 (IILVTVWLKSSAAMAK) lie on the Cytoplasmic side of the membrane. A helical membrane pass occupies residues 236–258 (AFSTLASHIAVVILFFGPCIFIY). Residues 259-269 (VWPFTISPLDK) are Extracellular-facing. Residues 270–289 (FLAIFYTVFTPVLNPIIYTL) traverse the membrane as a helical segment. Over 290–323 (RNRDMKAAVRKIVNHYLRPRRISEMSLVVRTSFH) the chain is Cytoplasmic.

It belongs to the G-protein coupled receptor 1 family.

Its subcellular location is the cell membrane. Functionally, odorant receptor. This Homo sapiens (Human) protein is Olfactory receptor 4K5 (OR4K5).